The following is a 450-amino-acid chain: 3-phosphoshikimate 1-carboxyvinyltransferase (450 aa).

3-phosphoshikimate-binding residues include Lys-28, Ser-29, and Arg-33. Lys-28 serves as a coordination point for phosphoenolpyruvate. The phosphoenolpyruvate site is built by Gly-100 and Arg-128. Residues Ser-173, Gln-175, Asp-326, and Lys-353 each coordinate 3-phosphoshikimate. Gln-175 provides a ligand contact to phosphoenolpyruvate. The Proton acceptor role is filled by Asp-326. Phosphoenolpyruvate-binding residues include Arg-357 and Arg-402.

This sequence belongs to the EPSP synthase family. In terms of assembly, monomer.

It localises to the cytoplasm. It carries out the reaction 3-phosphoshikimate + phosphoenolpyruvate = 5-O-(1-carboxyvinyl)-3-phosphoshikimate + phosphate. It functions in the pathway metabolic intermediate biosynthesis; chorismate biosynthesis; chorismate from D-erythrose 4-phosphate and phosphoenolpyruvate: step 6/7. Functionally, catalyzes the transfer of the enolpyruvyl moiety of phosphoenolpyruvate (PEP) to the 5-hydroxyl of shikimate-3-phosphate (S3P) to produce enolpyruvyl shikimate-3-phosphate and inorganic phosphate. The polypeptide is 3-phosphoshikimate 1-carboxyvinyltransferase (Brucella abortus biovar 1 (strain 9-941)).